A 137-amino-acid polypeptide reads, in one-letter code: Large-conductance mechanosensitive channel (137 aa).

Transmembrane regions (helical) follow at residues Phe-10–Gly-30 and Gly-76–Ile-96.

The protein belongs to the MscL family. In terms of assembly, homopentamer.

The protein localises to the cell inner membrane. Its function is as follows. Channel that opens in response to stretch forces in the membrane lipid bilayer. May participate in the regulation of osmotic pressure changes within the cell. This chain is Large-conductance mechanosensitive channel, found in Salmonella typhimurium (strain LT2 / SGSC1412 / ATCC 700720).